The following is a 1368-amino-acid chain: DNA-directed RNA polymerase subunit beta (1368 aa).

It belongs to the RNA polymerase beta chain family. As to quaternary structure, the RNAP catalytic core consists of 2 alpha, 1 beta, 1 beta' and 1 omega subunit. When a sigma factor is associated with the core the holoenzyme is formed, which can initiate transcription.

It carries out the reaction RNA(n) + a ribonucleoside 5'-triphosphate = RNA(n+1) + diphosphate. Its function is as follows. DNA-dependent RNA polymerase catalyzes the transcription of DNA into RNA using the four ribonucleoside triphosphates as substrates. This Ralstonia pickettii (strain 12J) protein is DNA-directed RNA polymerase subunit beta.